A 402-amino-acid polypeptide reads, in one-letter code: 4-hydroxy-3-methylbut-2-enyl diphosphate reductase (402 aa).

Cysteine 66 serves as a coordination point for [4Fe-4S] cluster. Histidine 96 contacts (2E)-4-hydroxy-3-methylbut-2-enyl diphosphate. Histidine 96 is a binding site for dimethylallyl diphosphate. Residue histidine 96 coordinates isopentenyl diphosphate. Cysteine 157 is a [4Fe-4S] cluster binding site. A (2E)-4-hydroxy-3-methylbut-2-enyl diphosphate-binding site is contributed by histidine 185. Dimethylallyl diphosphate is bound at residue histidine 185. Histidine 185 is a binding site for isopentenyl diphosphate. Residue glutamate 187 is the Proton donor of the active site. Threonine 250 is a (2E)-4-hydroxy-3-methylbut-2-enyl diphosphate binding site. Cysteine 288 serves as a coordination point for [4Fe-4S] cluster. (2E)-4-hydroxy-3-methylbut-2-enyl diphosphate contacts are provided by serine 317, serine 318, asparagine 319, and serine 379. 4 residues coordinate dimethylallyl diphosphate: serine 317, serine 318, asparagine 319, and serine 379. The isopentenyl diphosphate site is built by serine 317, serine 318, asparagine 319, and serine 379.

This sequence belongs to the IspH family. Requires [4Fe-4S] cluster as cofactor.

It carries out the reaction isopentenyl diphosphate + 2 oxidized [2Fe-2S]-[ferredoxin] + H2O = (2E)-4-hydroxy-3-methylbut-2-enyl diphosphate + 2 reduced [2Fe-2S]-[ferredoxin] + 2 H(+). It catalyses the reaction dimethylallyl diphosphate + 2 oxidized [2Fe-2S]-[ferredoxin] + H2O = (2E)-4-hydroxy-3-methylbut-2-enyl diphosphate + 2 reduced [2Fe-2S]-[ferredoxin] + 2 H(+). Its pathway is isoprenoid biosynthesis; dimethylallyl diphosphate biosynthesis; dimethylallyl diphosphate from (2E)-4-hydroxy-3-methylbutenyl diphosphate: step 1/1. It functions in the pathway isoprenoid biosynthesis; isopentenyl diphosphate biosynthesis via DXP pathway; isopentenyl diphosphate from 1-deoxy-D-xylulose 5-phosphate: step 6/6. Functionally, catalyzes the conversion of 1-hydroxy-2-methyl-2-(E)-butenyl 4-diphosphate (HMBPP) into a mixture of isopentenyl diphosphate (IPP) and dimethylallyl diphosphate (DMAPP). Acts in the terminal step of the DOXP/MEP pathway for isoprenoid precursor biosynthesis. The chain is 4-hydroxy-3-methylbut-2-enyl diphosphate reductase from Gloeothece citriformis (strain PCC 7424) (Cyanothece sp. (strain PCC 7424)).